A 287-amino-acid chain; its full sequence is MASLKSIKKRIVSVKNTRQITKAMKMVSAAKLRRAQENVVAARPYAKKLGEVLDRLAKSQDGSSSPLLQKRISQKALLVVVTSDRGLCGGFNANICKAAERFIREKKAEFAEISVTTVGRKGFEFLKNRQKIHKNYGNVLSNLSYPTAALLAQEVVEGYVAEEYDEVYLLFNAFRSVMSQDITLQQLLPIVPEETAEEEYVPEYIYEPSKGELLDELLPKHIEVQVFKALLESVASEHGARMTAMDSASKNATEMIGKLTLQYNRARQAAITTELMEIISGAESIKG.

This sequence belongs to the ATPase gamma chain family. As to quaternary structure, F-type ATPases have 2 components, CF(1) - the catalytic core - and CF(0) - the membrane proton channel. CF(1) has five subunits: alpha(3), beta(3), gamma(1), delta(1), epsilon(1). CF(0) has three main subunits: a, b and c.

The protein localises to the cell inner membrane. Functionally, produces ATP from ADP in the presence of a proton gradient across the membrane. The gamma chain is believed to be important in regulating ATPase activity and the flow of protons through the CF(0) complex. The protein is ATP synthase gamma chain of Geobacter metallireducens (strain ATCC 53774 / DSM 7210 / GS-15).